The following is a 459-amino-acid chain: ATP synthase subunit beta (459 aa).

Position 148–155 (148–155 (GGAGVGKT)) interacts with ATP.

It belongs to the ATPase alpha/beta chains family. In terms of assembly, F-type ATPases have 2 components, CF(1) - the catalytic core - and CF(0) - the membrane proton channel. CF(1) has five subunits: alpha(3), beta(3), gamma(1), delta(1), epsilon(1). CF(0) has three main subunits: a(1), b(2) and c(9-12). The alpha and beta chains form an alternating ring which encloses part of the gamma chain. CF(1) is attached to CF(0) by a central stalk formed by the gamma and epsilon chains, while a peripheral stalk is formed by the delta and b chains.

It is found in the cell inner membrane. The catalysed reaction is ATP + H2O + 4 H(+)(in) = ADP + phosphate + 5 H(+)(out). Its function is as follows. Produces ATP from ADP in the presence of a proton gradient across the membrane. The catalytic sites are hosted primarily by the beta subunits. This is ATP synthase subunit beta from Ruthia magnifica subsp. Calyptogena magnifica.